We begin with the raw amino-acid sequence, 378 residues long: Chaperone protein DnaJ (378 aa).

Residues 5 to 69 enclose the J domain; it reads EYYDRLGVSK…QKRAAYDQYG (65 aa). The segment at 134-216 adopts a CR-type zinc-finger fold; sequence GVEKEVSYNR…CHGTGHEKQA (83 aa). Residues Cys147, Cys150, Cys164, Cys167, Cys190, Cys193, Cys204, and Cys207 each contribute to the Zn(2+) site. 4 CXXCXGXG motif repeats span residues 147-154, 164-171, 190-197, and 204-211; these read CGTCLGSG, CRKCHGSG, CDICHGSG, and CQTCHGTG.

The protein belongs to the DnaJ family. Homodimer. Zn(2+) serves as cofactor.

The protein localises to the cytoplasm. Participates actively in the response to hyperosmotic and heat shock by preventing the aggregation of stress-denatured proteins and by disaggregating proteins, also in an autonomous, DnaK-independent fashion. Unfolded proteins bind initially to DnaJ; upon interaction with the DnaJ-bound protein, DnaK hydrolyzes its bound ATP, resulting in the formation of a stable complex. GrpE releases ADP from DnaK; ATP binding to DnaK triggers the release of the substrate protein, thus completing the reaction cycle. Several rounds of ATP-dependent interactions between DnaJ, DnaK and GrpE are required for fully efficient folding. Also involved, together with DnaK and GrpE, in the DNA replication of plasmids through activation of initiation proteins. This is Chaperone protein DnaJ from Streptococcus pyogenes.